Reading from the N-terminus, the 362-residue chain is Outer membrane porin F (362 aa).

The N-terminal stretch at 1–22 (MMKRNILAVIVPALLVAGTANA) is a signal peptide.

The protein belongs to the Gram-negative porin family. Homotrimer. Forms mixed heterotrimers with OmpC; other mixed heterotrimers are also probable.

The protein localises to the cell outer membrane. In terms of biological role, forms pores that allow passive diffusion of small molecules across the outer membrane. (Microbial infection) Is the major receptor for colicin E5. Its function is as follows. (Microbial infection) A mixed OmpC-OmpF heterotrimer is the outer membrane receptor for toxin CdiA-EC536. This Escherichia coli O6:K15:H31 (strain 536 / UPEC) protein is Outer membrane porin F (ompF).